A 151-amino-acid polypeptide reads, in one-letter code: Probable ubiquitin-conjugating enzyme E2 W-A (151 aa).

The UBC core domain maps to 3-151 (SMQKRLQKEL…TKWWYHDDTC (149 aa)). C91 acts as the Glycyl thioester intermediate in catalysis.

Belongs to the ubiquitin-conjugating enzyme family.

It is found in the nucleus. The catalysed reaction is S-ubiquitinyl-[E1 ubiquitin-activating enzyme]-L-cysteine + [E2 ubiquitin-conjugating enzyme]-L-cysteine = [E1 ubiquitin-activating enzyme]-L-cysteine + S-ubiquitinyl-[E2 ubiquitin-conjugating enzyme]-L-cysteine.. It catalyses the reaction S-ubiquitinyl-[E1 ubiquitin-activating enzyme]-L-cysteine + [acceptor protein]-N-terminal-amino acid = [E1 ubiquitin-activating enzyme]-L-cysteine + N-terminal-ubiquitinyl-[acceptor protein].. It participates in protein modification; protein ubiquitination. Its function is as follows. Accepts ubiquitin from the E1 complex and catalyzes its covalent attachment to other proteins. Catalyzes monoubiquitination. Involved in degradation of misfolded chaperone substrate and DNA repair. This is Probable ubiquitin-conjugating enzyme E2 W-A (ube2wa) from Danio rerio (Zebrafish).